Reading from the N-terminus, the 168-residue chain is MVEDILAPGLRVVFCGINPGLSSAGTGFPFAHPANRFWKVIYQAGFTDRQLKPQEAQHLLDYRCGVTKLVDRPTVQANEVSKQELHAGGRKLIEKIEDYQPQALAILGKRAYEQGFSQRGAQWGKQTLTIGSTQIWVLPNPSGLSRVSLEKLVEAYRELDQALVVRGR.

The protein belongs to the uracil-DNA glycosylase (UDG) superfamily. TDG/mug family. In terms of assembly, binds DNA as a monomer.

It is found in the cytoplasm. The catalysed reaction is Specifically hydrolyzes mismatched double-stranded DNA and polynucleotides, releasing free uracil.. Excises ethenocytosine and uracil, which can arise by alkylation or deamination of cytosine, respectively, from the corresponding mispairs with guanine in ds-DNA. It is capable of hydrolyzing the carbon-nitrogen bond between the sugar-phosphate backbone of the DNA and the mispaired base. The complementary strand guanine functions in substrate recognition. Required for DNA damage lesion repair in stationary-phase cells. The chain is G/U mismatch-specific DNA glycosylase from Escherichia coli O139:H28 (strain E24377A / ETEC).